A 276-amino-acid polypeptide reads, in one-letter code: 6-chlorohydroxyquinol 1,2-dioxygenase (276 aa).

Residues Tyr-157, Tyr-191, His-215, and His-217 each coordinate Fe cation.

The protein belongs to the intradiol ring-cleavage dioxygenase family. It depends on Fe(3+) as a cofactor.

Its pathway is aromatic compound metabolism. It functions in the pathway xenobiotic degradation. Its function is as follows. Involved in the degradation of 2,4,6-trichlorophenol (2,4,6-TCP). May catalyze the oxidation of 6-chlorohydroxyquinol (6-CHQ) to 2-chloromaleylacetate (2-CMA). This is 6-chlorohydroxyquinol 1,2-dioxygenase from Cupriavidus pinatubonensis (strain JMP 134 / LMG 1197) (Cupriavidus necator (strain JMP 134)).